A 414-amino-acid chain; its full sequence is Protein PHLOEM PROTEIN 2-LIKE A10 (414 aa).

2 consecutive transmembrane segments (helical) span residues 20-40 (WLIFMAISGVSGYGAYKVYHL) and 379-399 (YVGAKSSVIITVCLALYLHII).

Its subcellular location is the membrane. The protein is Protein PHLOEM PROTEIN 2-LIKE A10 (PP2A10) of Arabidopsis thaliana (Mouse-ear cress).